The chain runs to 130 residues: Small ribosomal subunit protein uS9 (130 aa).

It belongs to the universal ribosomal protein uS9 family.

This chain is Small ribosomal subunit protein uS9, found in Burkholderia thailandensis (strain ATCC 700388 / DSM 13276 / CCUG 48851 / CIP 106301 / E264).